Reading from the N-terminus, the 759-residue chain is 1,4-alpha-glucan branching enzyme GlgB (759 aa).

Asp-431 serves as the catalytic Nucleophile. Catalysis depends on Glu-484, which acts as the Proton donor.

This sequence belongs to the glycosyl hydrolase 13 family. GlgB subfamily. As to quaternary structure, monomer.

It carries out the reaction Transfers a segment of a (1-&gt;4)-alpha-D-glucan chain to a primary hydroxy group in a similar glucan chain.. It participates in glycan biosynthesis; glycogen biosynthesis. Functionally, catalyzes the formation of the alpha-1,6-glucosidic linkages in glycogen by scission of a 1,4-alpha-linked oligosaccharide from growing alpha-1,4-glucan chains and the subsequent attachment of the oligosaccharide to the alpha-1,6 position. The protein is 1,4-alpha-glucan branching enzyme GlgB of Prochlorococcus marinus (strain MIT 9211).